A 682-amino-acid polypeptide reads, in one-letter code: Actin-binding LIM protein 3 (682 aa).

Position 1 is an N-acetylmethionine (Met-1). 4 LIM zinc-binding domains span residues 21 to 80 (IQCY…LYGT), 80 to 140 (TRCD…MTSS), 149 to 208 (SHCA…QFGI), and 208 to 268 (IKCE…ARAE). Phosphoserine occurs at positions 277, 280, 282, 286, 290, 337, 372, and 373. Disordered regions lie at residues 372 to 426 (SSPG…SYQA) and 440 to 475 (YRKP…PAYS). A Phosphotyrosine modification is found at Tyr-376. 2 positions are modified to phosphoserine: Ser-379 and Ser-388. Composition is skewed to polar residues over residues 380 to 393 (PTYS…TFSR), 405 to 425 (GRSS…TSYQ), and 453 to 466 (STAT…DISQ). Phosphoserine occurs at positions 492, 502, and 503. Position 542 is a phosphothreonine (Thr-542). Phosphoserine occurs at positions 566, 575, and 606. The 69-residue stretch at 614–682 (MREYKIYPYE…NELKKQARLF (69 aa)) folds into the HP domain. Arg-630 carries the omega-N-methylarginine modification.

Directly interacts with F-actin and ABRA. Expressed in heart, brain, lung and liver. In the brain, highly expressed in the olfactory bulb. In the hippocampus, expressed selectively in the CA2 and CA3 fields. In the cerebellum, expressed in internal granular cells.

Its subcellular location is the cytoplasm. In terms of biological role, may act as scaffold protein. May stimulate ABRA activity and ABRA-dependent SRF transcriptional activity. The chain is Actin-binding LIM protein 3 (Ablim3) from Mus musculus (Mouse).